We begin with the raw amino-acid sequence, 78 residues long: Acyl carrier protein (78 aa).

The region spanning 2–77 is the Carrier domain; that stretch reads SDTAERVKKI…DAVKFIDKAS (76 aa). Ser-37 is modified (O-(pantetheine 4'-phosphoryl)serine).

It belongs to the acyl carrier protein (ACP) family. In terms of processing, 4'-phosphopantetheine is transferred from CoA to a specific serine of apo-ACP by AcpS. This modification is essential for activity because fatty acids are bound in thioester linkage to the sulfhydryl of the prosthetic group.

Its subcellular location is the cytoplasm. Its pathway is lipid metabolism; fatty acid biosynthesis. Functionally, carrier of the growing fatty acid chain in fatty acid biosynthesis. The chain is Acyl carrier protein from Brucella abortus (strain S19).